Reading from the N-terminus, the 130-residue chain is Small ribosomal subunit protein uS9 (130 aa).

The protein belongs to the universal ribosomal protein uS9 family.

The chain is Small ribosomal subunit protein uS9 from Streptococcus gordonii (strain Challis / ATCC 35105 / BCRC 15272 / CH1 / DL1 / V288).